Consider the following 135-residue polypeptide: Translation initiation factor 2 subunit beta (135 aa).

The protein belongs to the eIF-2-beta/eIF-5 family. Heterotrimer composed of an alpha, a beta and a gamma chain.

EIF-2 functions in the early steps of protein synthesis by forming a ternary complex with GTP and initiator tRNA. In Methanobrevibacter smithii (strain ATCC 35061 / DSM 861 / OCM 144 / PS), this protein is Translation initiation factor 2 subunit beta.